A 186-amino-acid polypeptide reads, in one-letter code: Glutathione peroxidase 7 (186 aa).

Residues 1–18 form the signal peptide; sequence MVAARAAAWLLLAAAACA. The active site involves C56.

The protein belongs to the glutathione peroxidase family.

It is found in the secreted. The enzyme catalyses 2 glutathione + H2O2 = glutathione disulfide + 2 H2O. The sequence is that of Glutathione peroxidase 7 (GPX7) from Bos taurus (Bovine).